Reading from the N-terminus, the 750-residue chain is Phosphate transporter PHO1 homolog 7 (750 aa).

Positions 1–298 constitute an SPX domain; that stretch reads MKFGKDFVRQ…SRSAAKPYME (298 aa). Residues 1-350 lie on the Cytoplasmic side of the membrane; the sequence is MKFGKDFVRQ…KVKKEKHRIT (350 aa). A helical transmembrane segment spans residues 351–371; that stretch reads FSTGFFVGCTVSLVVALVMFI. The Extracellular segment spans residues 372–391; the sequence is HARNIMGAVGHKVYMETMFP. Residues 392 to 412 traverse the membrane as a helical segment; that stretch reads LYSLFAFVVLHMIMYASNIYF. At 413–435 the chain is on the cytoplasmic side; the sequence is WKRYRVNYPFIFGFKEGTELGYR. The chain crosses the membrane as a helical span at residues 436 to 456; it reads HVLLLSFGLGTLALCAVLINL. Residues 457–472 lie on the Extracellular side of the membrane; the sequence is DMEMDPNTNDYKTMTE. A helical membrane pass occupies residues 473-493; that stretch reads LLPMFILALVVAILFCPFNIF. The Cytoplasmic portion of the chain corresponds to 494–622; the sequence is YRSSRVFFLM…YSFNRGNIWK (129 aa). The EXS domain occupies 557–750; the sequence is RSSDVYSTFY…NYNEEEDRDS (194 aa). A helical membrane pass occupies residues 623-643; that stretch reads ISAWVFSALATFYGTYWDIVF. At 644-666 the chain is on the extracellular side; sequence DWGLLHRPSKHLLREKLLVPHKA. Residues 667 to 687 form a helical membrane-spanning segment; the sequence is VYYVAIVLNIVLRMAWLQTVL. The Cytoplasmic portion of the chain corresponds to 688-750; that stretch reads DFNLSFLHRE…NYNEEEDRDS (63 aa).

The protein belongs to the SYG1 (TC 2.A.94) family. As to expression, expressed in root tips, vascular cylinders of roots and filaments, leaf hydathodes, stem, receptacle and stigma apex.

Its subcellular location is the cell membrane. In terms of biological role, may transport inorganic phosphate (Pi). The protein is Phosphate transporter PHO1 homolog 7 (PHO1-H7) of Arabidopsis thaliana (Mouse-ear cress).